A 595-amino-acid chain; its full sequence is Peptidyl-prolyl cis-trans isomerase CYP65 (595 aa).

The U-box domain occupies 35-108 (KSLPYYCCAL…GEYHCPVLNK (74 aa)). One can recognise a PPIase cyclophilin-type domain in the interval 342 to 496 (KKGYVQFQTT…EEIKIIEASV (155 aa)). Disordered stretches follow at residues 503 to 546 (ELDE…GGGG) and 576 to 595 (SKKR…FSSW). Residues 510-525 (KEKAEKEKNEDKDIEK) are compositionally biased toward basic and acidic residues. The segment covering 582 to 595 (TASASTGFKDFSSW) has biased composition (polar residues).

The protein belongs to the cyclophilin-type PPIase family. PPIL2 subfamily. Expressed in leaves, flower buds and stems. Lower levels of expression in roots.

The protein localises to the nucleus. It catalyses the reaction [protein]-peptidylproline (omega=180) = [protein]-peptidylproline (omega=0). The catalysed reaction is S-ubiquitinyl-[E2 ubiquitin-conjugating enzyme]-L-cysteine + [acceptor protein]-L-lysine = [E2 ubiquitin-conjugating enzyme]-L-cysteine + N(6)-ubiquitinyl-[acceptor protein]-L-lysine.. It functions in the pathway protein modification; protein ubiquitination. In terms of biological role, may catalyze the cis-trans isomerization of proline imidic peptide bonds in oligopeptides thereby assisting the folding of proteins. May also function as a chaperone, playing a role in intracellular transport of proteins. May also have a protein ubiquitin ligase activity acting as an E3 ubiquitin protein ligase or as a ubiquitin-ubiquitin ligase promoting elongation of ubiquitin chains on proteins. This is Peptidyl-prolyl cis-trans isomerase CYP65 (CYP65) from Arabidopsis thaliana (Mouse-ear cress).